The primary structure comprises 427 residues: Trigger factor (427 aa).

The PPIase FKBP-type domain occupies 163 to 248 (GDTVVIDFVG…VNEVKAKELP (86 aa)).

The protein belongs to the FKBP-type PPIase family. Tig subfamily.

It is found in the cytoplasm. The catalysed reaction is [protein]-peptidylproline (omega=180) = [protein]-peptidylproline (omega=0). In terms of biological role, involved in protein export. Acts as a chaperone by maintaining the newly synthesized protein in an open conformation. Functions as a peptidyl-prolyl cis-trans isomerase. The sequence is that of Trigger factor from Lactococcus lactis subsp. cremoris (strain MG1363).